The sequence spans 132 residues: MTEVRSCFSSALRRRQCASTSAAVSATSSPKTCGCRCTSFVTSVPATSSIANGSSASSWAIRAWKTTWSRTSPNSSRSSPRSPASMASTSSYISSTPYLTRSWWVRRALHGHARRIRSMTSTTSSRRAPGRS.

A disordered region spans residues 68–91 (WSRTSPNSSRSSPRSPASMASTSS).

This is an uncharacterized protein from Streptomyces cacaoi.